Reading from the N-terminus, the 276-residue chain is NH(3)-dependent NAD(+) synthetase (276 aa).

Residue 43–50 (GISGGVDS) participates in ATP binding. Asp-49 is a Mg(2+) binding site. A deamido-NAD(+)-binding site is contributed by Arg-146. Residue Thr-166 participates in ATP binding. Glu-171 lines the Mg(2+) pocket. Residues Lys-179 and Asp-186 each contribute to the deamido-NAD(+) site. Positions 195 and 217 each coordinate ATP. 266-267 (HK) contributes to the deamido-NAD(+) binding site.

It belongs to the NAD synthetase family. Homodimer.

The catalysed reaction is deamido-NAD(+) + NH4(+) + ATP = AMP + diphosphate + NAD(+) + H(+). Its pathway is cofactor biosynthesis; NAD(+) biosynthesis; NAD(+) from deamido-NAD(+) (ammonia route): step 1/1. Functionally, catalyzes the ATP-dependent amidation of deamido-NAD to form NAD. Uses ammonia as a nitrogen source. The protein is NH(3)-dependent NAD(+) synthetase of Vibrio parahaemolyticus serotype O3:K6 (strain RIMD 2210633).